Reading from the N-terminus, the 614-residue chain is UDP-sugar pyrophosphorylase (614 aa).

A2 bears the N-acetylalanine mark.

The protein belongs to the USP family. Mg(2+) serves as cofactor. Requires Mn(2+) as cofactor. Ubiquitous, but most abundant in rosette leaves, inflorescences, stems, stamens and pollen.

It carries out the reaction a monosaccharide 1-phosphate + UTP + H(+) = a UDP-monosaccharide + diphosphate. Required for the synthesis of the intine, the pectocellulosic inner wall of developing pollen. May function as the terminal enzyme of the myo-inositol oxidation (MIO) pathway. May also play a role in the salvage pathway for synthesis of nucleotide sugars. Can use a wide range of substrates including glucose-1-phosphate, galactose-1-phosphate, xylose-1-phosphate, arabinose-1-phosphate and glucuronate-1-phosphate. This Arabidopsis thaliana (Mouse-ear cress) protein is UDP-sugar pyrophosphorylase (USP).